The sequence spans 298 residues: MFKENTIKLGIAPIAWTNDDMPELGAENTFEQCISEMALAGFNGSEVGNKYPRNTVVLKKSLELRNLEIASAWFSAFLTTKPLEETVQAFIKHRDFLHDMGAKVIVVSEQGHSIQGLMDVPLFKNKPVFTEEEWEKLADGLHHLGKLAQEKGLHIVYHHHMGTGVQTTAEIEKLMDMTDPELVSLLFDTGHLVFSGEEPLYILKKYLSRIKHVHLKDIRQEVVDAVKESDLSFLQAVKNGAFTVPGDGVIVFDEVFTILANSDYKGWFVVEAEQDPALANPFEYALKARKFIQEKAGL.

The protein belongs to the IolE/MocC family. Requires glutathione as cofactor. The cofactor is Co(2+). Mn(2+) serves as cofactor.

The enzyme catalyses scyllo-inosose = 3D-3,5/4-trihydroxycyclohexane-1,2-dione + H2O. Its pathway is polyol metabolism; myo-inositol degradation into acetyl-CoA; acetyl-CoA from myo-inositol: step 2/7. In terms of biological role, catalyzes the dehydration of inosose (2-keto-myo-inositol, 2KMI or 2,4,6/3,5-pentahydroxycyclohexanone) to 3D-(3,5/4)-trihydroxycyclohexane-1,2-dione (D-2,3-diketo-4-deoxy-epi-inositol). In Bacillus cereus (strain ZK / E33L), this protein is Inosose dehydratase 2.